Here is a 120-residue protein sequence, read N- to C-terminus: Large ribosomal subunit protein eL18 (120 aa).

This sequence belongs to the eukaryotic ribosomal protein eL18 family.

The polypeptide is Large ribosomal subunit protein eL18 (Thermococcus onnurineus (strain NA1)).